Here is a 205-residue protein sequence, read N- to C-terminus: MIGRLNGILVEKQPPEILLEVSGVGYEVQMPMTCFYDLPKVGESAIVYTHFVVREDAQLLFGFNNKVERALFRELLKANGVGPKLGLAILSGMSAQQFVSCVNNEDSTSLVKLPGVGKKTAERLVLEMKDRLKNWGNDLFTPFSDSAVIEPFSDATIANNAADDAVSALVSLGYKLPQAQKAVKSVSKPDMSTEVLIKESLKSML.

The tract at residues 1-64 is domain I; the sequence is MIGRLNGILV…EDAQLLFGFN (64 aa). The tract at residues 65 to 143 is domain II; that stretch reads NKVERALFRE…NWGNDLFTPF (79 aa). Positions 144-156 are flexible linker; sequence SDSAVIEPFSDAT. A domain III region spans residues 157 to 205; it reads IANNAADDAVSALVSLGYKLPQAQKAVKSVSKPDMSTEVLIKESLKSML.

Belongs to the RuvA family. As to quaternary structure, homotetramer. Forms an RuvA(8)-RuvB(12)-Holliday junction (HJ) complex. HJ DNA is sandwiched between 2 RuvA tetramers; dsDNA enters through RuvA and exits via RuvB. An RuvB hexamer assembles on each DNA strand where it exits the tetramer. Each RuvB hexamer is contacted by two RuvA subunits (via domain III) on 2 adjacent RuvB subunits; this complex drives branch migration. In the full resolvosome a probable DNA-RuvA(4)-RuvB(12)-RuvC(2) complex forms which resolves the HJ.

The protein localises to the cytoplasm. Functionally, the RuvA-RuvB-RuvC complex processes Holliday junction (HJ) DNA during genetic recombination and DNA repair, while the RuvA-RuvB complex plays an important role in the rescue of blocked DNA replication forks via replication fork reversal (RFR). RuvA specifically binds to HJ cruciform DNA, conferring on it an open structure. The RuvB hexamer acts as an ATP-dependent pump, pulling dsDNA into and through the RuvAB complex. HJ branch migration allows RuvC to scan DNA until it finds its consensus sequence, where it cleaves and resolves the cruciform DNA. In Pseudoalteromonas translucida (strain TAC 125), this protein is Holliday junction branch migration complex subunit RuvA.